A 392-amino-acid polypeptide reads, in one-letter code: MSNFKNFTLNSFEDYYGKPSETPKMEEEKLEVTNVNASSSKKVHKSKKSTSKYDQKNVFRNSMTGIAQILPTKPVKIIEQNIDFANPKSFDLLQSTHTICFNKRINTTNTKLNVETHTSSDIDNDILHVGAPTDLGGNSNDEAETRQLRKFRWSNNKEKSLCEKLTVIYWALLLHTTKRASKRRPILCHQMIAEFFNRVYKEKSRVPITSRYIRDNLVAWVTQGKELHEKGWVGDAKTGDLQEQFNIATVKLYESAEDGRLSIGKDKPFREENTGSDSLVRAEEDSTAVTNENGHISSEKNLKKDRRESIRNQILTLDLNDEDFFQNVMKVLSAIDEPELRQYVIVISELVSMEMDDGKTVREKLRDVELNINRLQVDIKEIKEMLVTLINK.

Ser-11 carries the post-translational modification Phosphoserine. The interval 18–52 (KPSETPKMEEEKLEVTNVNASSSKKVHKSKKSTSK) is disordered. The segment covering 21-31 (ETPKMEEEKLE) has biased composition (basic and acidic residues). The segment covering 41–50 (KKVHKSKKST) has biased composition (basic residues). Residue Ser-139 is modified to Phosphoserine. A disordered region spans residues 284-303 (EDSTAVTNENGHISSEKNLK). Positions 287–296 (TAVTNENGHI) are enriched in polar residues.

It localises to the cytoplasm. The protein localises to the nucleus. This is Protein SRL2 (SRL2) from Saccharomyces cerevisiae (strain ATCC 204508 / S288c) (Baker's yeast).